A 355-amino-acid chain; its full sequence is NADH-quinone oxidoreductase subunit H (355 aa).

8 helical membrane-spanning segments follow: residues 25-45 (LVRI…LILW), 91-111 (WLYL…WAVI), 126-146 (LLYA…AGWA), 170-190 (MGFA…SEIV), 205-225 (FLSW…VSGI), 253-273 (MAFA…SALA), 290-310 (FIPG…VFIW), and 330-350 (VFLP…MSPL).

The protein belongs to the complex I subunit 1 family. NDH-1 is composed of 14 different subunits. Subunits NuoA, H, J, K, L, M, N constitute the membrane sector of the complex.

It localises to the cell inner membrane. It catalyses the reaction a quinone + NADH + 5 H(+)(in) = a quinol + NAD(+) + 4 H(+)(out). Its function is as follows. NDH-1 shuttles electrons from NADH, via FMN and iron-sulfur (Fe-S) centers, to quinones in the respiratory chain. The immediate electron acceptor for the enzyme in this species is believed to be ubiquinone. Couples the redox reaction to proton translocation (for every two electrons transferred, four hydrogen ions are translocated across the cytoplasmic membrane), and thus conserves the redox energy in a proton gradient. This subunit may bind ubiquinone. The sequence is that of NADH-quinone oxidoreductase subunit H from Burkholderia vietnamiensis (strain G4 / LMG 22486) (Burkholderia cepacia (strain R1808)).